The primary structure comprises 372 residues: Fatty acid 2-hydroxylase (372 aa).

A Cytochrome b5 heme-binding domain is found at 8–86; that stretch reads AASFSPSEVQ…LEQYYVGELR (79 aa). Heme contacts are provided by His43 and His69. The next 2 helical transmembrane spans lie at 168-188 and 213-233; these read VWYS…WSYY and SMFP…EYLI. The Fatty acid hydroxylase domain maps to 219 to 361; sequence FMLGIFLWSL…TKLWDYCFHT (143 aa). Positions 234, 239, 257, 260, and 261 each coordinate Zn(2+). The next 2 membrane-spanning stretches (helical) occupy residues 271–291 and 292–312; these read VFPP…LQLI and LPEA…VLYD. Residues His315, His319, His336, His339, and His340 each contribute to the Zn(2+) site.

The protein belongs to the sterol desaturase family. SCS7 subfamily. Zn(2+) is required as a cofactor.

The protein resides in the endoplasmic reticulum membrane. It localises to the microsome membrane. The enzyme catalyses a 1,2-saturated fatty acid + 2 Fe(II)-[cytochrome b5] + O2 + 2 H(+) = a (R)-2-hydroxy fatty acid + 2 Fe(III)-[cytochrome b5] + H2O. It carries out the reaction hexadecanoate + 2 Fe(II)-[cytochrome b5] + O2 + 2 H(+) = (R)-2-hydroxyhexadecanoate + 2 Fe(III)-[cytochrome b5] + H2O. It catalyses the reaction octadecanoate + 2 Fe(II)-[cytochrome b5] + O2 + 2 H(+) = (R)-2-hydroxyoctadecanoate + 2 Fe(III)-[cytochrome b5] + H2O. The catalysed reaction is docosanoate + 2 Fe(II)-[cytochrome b5] + O2 + 2 H(+) = 2-hydroxydocosanoate + 2 Fe(III)-[cytochrome b5] + H2O. The enzyme catalyses tetracosanoate + 2 Fe(II)-[cytochrome b5] + O2 + 2 H(+) = (R)-2-hydroxytetracosanoate + 2 Fe(III)-[cytochrome b5] + H2O. The protein operates within lipid metabolism; fatty acid metabolism. It functions in the pathway sphingolipid metabolism; galactosylceramide biosynthesis. In terms of biological role, catalyzes the hydroxylation of free fatty acids at the C-2 position to produce 2-hydroxy fatty acids, which are building blocks of sphingolipids and glycosphingolipids common in neural tissue and epidermis. FA2H is stereospecific for the production of (R)-2-hydroxy fatty acids. Plays an essential role in the synthesis of galactosphingolipids of the myelin sheath. Responsible for the synthesis of sphingolipids and glycosphingolipids involved in the formation of epidermal lamellar bodies critical for skin permeability barrier. Participates in the synthesis of glycosphingolipids and a fraction of type II wax diesters in sebaceous gland, specifically regulating hair follicle homeostasis. Involved in the synthesis of sphingolipids of plasma membrane rafts, controlling lipid raft mobility and trafficking of raft-associated proteins. The sequence is that of Fatty acid 2-hydroxylase (FA2H) from Macaca fascicularis (Crab-eating macaque).